We begin with the raw amino-acid sequence, 1199 residues long: Tubulin-specific chaperone D (1199 aa).

Disordered regions lie at residues Met-1–Ala-23 and Gln-337–Val-361. Acidic residues predominate over residues Asp-14 to Ala-23. HEAT repeat units follow at residues Val-368–Val-406, Glu-603–Leu-639, Ala-757–Phe-793, and Gly-1111–Tyr-1147.

It belongs to the TBCD family. In terms of assembly, found in a complex with at least ARL2, PPP2CB, PPP2R1A, PPP2R2A, PPP2R5E and TBCD. Interacts with PPP2CB. Part of a supercomplex made of cofactors A to E. Cofactors A and D function by capturing and stabilizing tubulin in a quasi-native conformation. Cofactor E binds to the cofactor D-tubulin complex; interaction with cofactor C then causes the release of tubulin polypeptides that are committed to the native state. Interacts with ARL2; interaction is enhanced with the GDP-bound form of ARL2. Does not interact with ARL3, ARL4A and ARL4D. Interacts with beta tubulin. Interacts with TBCE.

It localises to the cell junction. Its subcellular location is the tight junction. The protein localises to the lateral cell membrane. It is found in the cytoplasm. The protein resides in the adherens junction. It localises to the cytoskeleton. Its subcellular location is the microtubule organizing center. The protein localises to the centrosome. Tubulin-folding protein implicated in the first step of the tubulin folding pathway and required for tubulin complex assembly. Involved in the regulation of microtubule polymerization or depolymerization, it modulates microtubule dynamics by capturing GTP-bound beta-tubulin (TUBB). Its ability to interact with beta tubulin is regulated via its interaction with ARL2. Acts as a GTPase-activating protein (GAP) for ARL2. Induces microtubule disruption in absence of ARL2. Increases degradation of beta tubulin, when overexpressed in polarized cells. Promotes epithelial cell detachment, a process antagonized by ARL2. Induces tight adherens and tight junctions disassembly at the lateral cell membrane. Required for correct assembly and maintenance of the mitotic spindle, and proper progression of mitosis. Involved in neuron morphogenesis. This chain is Tubulin-specific chaperone D (TBCD), found in Bos taurus (Bovine).